The primary structure comprises 469 residues: Glutamate--tRNA ligase (469 aa).

A 'HIGH' region motif is present at residues 11 to 21 (PSPTGFIHLGN). Over residues 118–131 (GEKPRYDGTWRPEP) the composition is skewed to basic and acidic residues. The segment at 118–139 (GEKPRYDGTWRPEPGKVLPEPP) is disordered. Positions 243–247 (KMSKR) match the 'KMSKS' region motif. ATP is bound at residue Lys-246.

It belongs to the class-I aminoacyl-tRNA synthetase family. Glutamate--tRNA ligase type 1 subfamily. As to quaternary structure, monomer.

It is found in the cytoplasm. It catalyses the reaction tRNA(Glu) + L-glutamate + ATP = L-glutamyl-tRNA(Glu) + AMP + diphosphate. Its function is as follows. Catalyzes the attachment of glutamate to tRNA(Glu) in a two-step reaction: glutamate is first activated by ATP to form Glu-AMP and then transferred to the acceptor end of tRNA(Glu). This is Glutamate--tRNA ligase from Burkholderia pseudomallei (strain 668).